Here is a 291-residue protein sequence, read N- to C-terminus: Elongation factor Ts (291 aa).

Residues 79–82 are involved in Mg(2+) ion dislocation from EF-Tu; the sequence is TDFV.

The protein belongs to the EF-Ts family.

Its subcellular location is the cytoplasm. Associates with the EF-Tu.GDP complex and induces the exchange of GDP to GTP. It remains bound to the aminoacyl-tRNA.EF-Tu.GTP complex up to the GTP hydrolysis stage on the ribosome. The sequence is that of Elongation factor Ts from Stenotrophomonas maltophilia (strain K279a).